The sequence spans 63 residues: Light-harvesting protein B-800/850 alpha chain (63 aa).

The Cytoplasmic segment spans residues 1-14 (MNNAKMWLVVKPTV). A helical transmembrane segment spans residues 15–35 (GIPLFLVACAIASFLVHLMLV). His-31 contributes to the a bacteriochlorophyll binding site. Topologically, residues 36-63 (LTTGWMGDYYSGSFEAASLVSNATTLLS) are periplasmic.

Belongs to the antenna complex alpha subunit family. In terms of assembly, the core complex is formed by different alpha and beta chains, binding bacteriochlorophyll molecules, and arranged most probably in tetrameric structures disposed around the reaction center. The non-pigmented gamma chains may constitute additional components.

The protein localises to the cell inner membrane. Antenna complexes are light-harvesting systems, which transfer the excitation energy to the reaction centers. The polypeptide is Light-harvesting protein B-800/850 alpha chain (pucA) (Rhodovulum sulfidophilum (Rhodobacter sulfidophilus)).